The primary structure comprises 115 residues: Large ribosomal subunit protein bL19 (115 aa).

Belongs to the bacterial ribosomal protein bL19 family.

This protein is located at the 30S-50S ribosomal subunit interface and may play a role in the structure and function of the aminoacyl-tRNA binding site. The sequence is that of Large ribosomal subunit protein bL19 from Nitratidesulfovibrio vulgaris (strain DSM 19637 / Miyazaki F) (Desulfovibrio vulgaris).